Here is a 132-residue protein sequence, read N- to C-terminus: Auxin-responsive protein SAUR72 (132 aa).

Residues 22-54 form a disordered region; it reads SDSQRPSRRSESFLRSSVTRRSKKQTSSVPEGH. The span at 23–33 shows a compositional bias: basic and acidic residues; the sequence is DSQRPSRRSES.

The protein belongs to the ARG7 family. As to quaternary structure, interacts with and inhibits PP2C-D subfamily of type 2C phosphatases such as PP2C67/PP2C-D1. As to expression, highly expressed in the steles of roots and hypocotyls.

Its subcellular location is the cytoplasm. Provide a mechanistic link between auxin and plasma membrane H(+)-ATPases (PM H(+)-ATPases, e.g. AHA1 and AHA2), and triggers PM H(+)-ATPases activity by promoting phosphorylation of their C-terminal autoinhibitory domain as a result of PP2C-D subfamily of type 2C phosphatases inhibition, thus leading to the acidification of the apoplast and the facilitation of solutes and water uptake to drive cell expansion. Plays a role in the regulation of cell expansion, root meristem patterning and auxin transport. The polypeptide is Auxin-responsive protein SAUR72 (Arabidopsis thaliana (Mouse-ear cress)).